A 541-amino-acid polypeptide reads, in one-letter code: FAD-linked oxidoreductase pynB (541 aa).

Residues M1 to A20 form the signal peptide. N30, N57, N117, N131, N158, N253, N306, N343, N430, and N461 each carry an N-linked (GlcNAc...) asparagine glycan. Positions F71 to F242 constitute an FAD-binding PCMH-type domain.

The protein belongs to the oxygen-dependent FAD-linked oxidoreductase family. It depends on FAD as a cofactor.

Its pathway is secondary metabolite biosynthesis. Functionally, FAD-linked oxidoreductase; part of the gene cluster that mediates the biosynthesis of pyranonigrins, a family of antioxidative compounds. The first step of pyranonigrins biosynthesis is performed by the hybrid PKS-NRPS synthetase that condenses 6 malonyl-CoA units to an acetyl starter unit, to form a 1,3,5-trioxotetradecane-6,8-dienyl-ACP. The enoyl reductase (ER) domain of pynA is likely to be functional during the first two rounds of polyketide chain extension, to generate the saturated C-C bonds of the alkyl side chain. PynA subsequently forms the amide bond between the acyl chain and L-serine. Although pynA has a terminal reductase domain, it appears to require the thioesterase pynI for the release of the straight-chain intermediate from pynA via the formation of a tetramic acid pyranonigrin J. The methyltransferase pynC then coverts pyranonigrin J to pyranonigrin I via N-methylation. The FAD-dependent monooxygenase pynG catalyzes an epoxidation-mediated cyclization to form the dihydro-gamma-pyrone moiety, followed by pynD-catalyzed oxidation of the alcohol to the ketone and enolization to yield the characteristic tetramic acid-fused gamma-pyrone core of pyranonigrin H. Pyranonigrin H is substrate of pynH for dehydration-mediated exo-methylene formation from the serine side chain to produce pyranonigrin E, before the oxidase pynE reduces the exo-methylene of pyranonigrin E into a pendant methyl to form pyranonigrin G. The FAD-linked oxidoreductase pynB performs the reverse reaction and converts pyranonigrin G back to pyranonigrin E. This is FAD-linked oxidoreductase pynB from Aspergillus niger (strain ATCC MYA-4892 / CBS 513.88 / FGSC A1513).